We begin with the raw amino-acid sequence, 494 residues long: Probable cytochrome P450 518A1 (494 aa).

A helical transmembrane segment spans residues 1-21 (MSILIILIISIIFYLIFDFLY). Cys-438 is a heme binding site.

This sequence belongs to the cytochrome P450 family. The cofactor is heme.

The protein resides in the membrane. This Dictyostelium discoideum (Social amoeba) protein is Probable cytochrome P450 518A1 (cyp518A1).